The sequence spans 371 residues: Alginate lyase (371 aa).

A signal peptide spans 1–26; sequence MQSTDLKRLLIPSLLGLAIVTGSAQA. Substrate-binding positions include 67-68, 140-141, and tyrosine 258; these read SK and HT.

It belongs to the polysaccharide lyase 5 family.

It is found in the periplasm. It carries out the reaction Eliminative cleavage of alginate to give oligosaccharides with 4-deoxy-alpha-L-erythro-hex-4-enuronosyl groups at their non-reducing ends and beta-D-mannuronate at their reducing end.. In terms of biological role, catalyzes the depolymerization of alginate by cleaving the beta-1,4 glycosidic bond between two adjacent sugar residues via a beta-elimination mechanism. May serve to degrade mislocalized alginate that is trapped in the periplasmic space. This Pseudomonas fluorescens (strain ATCC BAA-477 / NRRL B-23932 / Pf-5) protein is Alginate lyase.